A 933-amino-acid polypeptide reads, in one-letter code: Phosphoenolpyruvate carboxylase (933 aa).

Residues H158 and K592 contribute to the active site.

Belongs to the PEPCase type 1 family. Mg(2+) serves as cofactor.

The catalysed reaction is oxaloacetate + phosphate = phosphoenolpyruvate + hydrogencarbonate. Forms oxaloacetate, a four-carbon dicarboxylic acid source for the tricarboxylic acid cycle. This Nitrosomonas eutropha (strain DSM 101675 / C91 / Nm57) protein is Phosphoenolpyruvate carboxylase.